The sequence spans 97 residues: Putative membrane protein insertion efficiency factor (97 aa).

This sequence belongs to the UPF0161 family.

It is found in the cell membrane. Functionally, could be involved in insertion of integral membrane proteins into the membrane. The sequence is that of Putative membrane protein insertion efficiency factor from Lactobacillus johnsonii (strain CNCM I-12250 / La1 / NCC 533).